The chain runs to 1089 residues: Electroneutral sodium bicarbonate exchanger 1 (1089 aa).

The Extracellular portion of the chain corresponds to Met-1 to Cys-476. The interval Leu-55–Leu-90 is disordered. A compositionally biased stretch (basic residues) spans Gln-58 to Arg-76. Residues Leu-477–Leu-497 form a helical membrane-spanning segment. Residues Leu-498 to Arg-505 are Cytoplasmic-facing. Residues Ile-506–Ala-526 traverse the membrane as a helical segment. Residues Gly-527–Leu-563 are Extracellular-facing. A helical transmembrane segment spans residues Ile-564 to Val-584. Over Cys-585–Glu-593 the chain is Cytoplasmic. A helical membrane pass occupies residues Ala-594–Leu-614. At Ala-615–His-685 the chain is on the extracellular side. 2 cysteine pairs are disulfide-bonded: Cys-634–Cys-682 and Cys-636–Cys-670. N-linked (GlcNAc) asparagine glycosylation occurs at Asn-644. The helical transmembrane segment at Gly-686 to Val-706 threads the bilayer. At Ser-707–Asp-729 the chain is on the cytoplasmic side. A helical transmembrane segment spans residues Phe-730–Ser-750. Residues Pro-751–Asn-776 are Extracellular-facing. Residues Pro-777–Met-797 traverse the membrane as a helical segment. The Cytoplasmic portion of the chain corresponds to Asp-798 to Asp-822. A helical transmembrane segment spans residues Leu-823 to Ala-843. Residues Ala-844–Thr-879 lie on the Extracellular side of the membrane. The helical transmembrane segment at Gly-880 to Ile-900 threads the bilayer. Residues Pro-901 to Met-902 are Cytoplasmic-facing. The chain crosses the membrane as a helical span at residues Pro-903–Phe-923. At Asp-924 to Cys-960 the chain is on the extracellular side. The helical transmembrane segment at Leu-961–Leu-981 threads the bilayer. Over Ala-982–Asn-1089 the chain is Cytoplasmic.

Belongs to the anion exchanger (TC 2.A.31) family. As to quaternary structure, homodimer. As to expression, expressed in the hippocampal neurons (at protein level). Highly expressed in brain with lower levels in lung, kidney and heart. In the kidney, there is high expression in the inner medulla, localized to the inner medullary collecting duct. In the brain, there seems to be three transcripts each having a different expression pattern. The smaller 3kb transcript has highest expression levels in the thalamus and the largest 9.5kb transcript has highest levels in the substantia nigra. The middle transcript of 4.4kb, which is also the main transcript in kidney, is highly expressed in thalamus. Hence, the highest levels are observed in the thalamus, amygdala and caudate nucleus and very low expression was seen in the corpus callosum.

It localises to the cell membrane. The protein resides in the apical cell membrane. The protein localises to the basolateral cell membrane. Its subcellular location is the cytoplasmic vesicle. It is found in the secretory vesicle. It localises to the synaptic vesicle membrane. It carries out the reaction 2 hydrogencarbonate(out) + chloride(in) + Na(+)(out) = 2 hydrogencarbonate(in) + chloride(out) + Na(+)(in). Mediates electroneutral sodium- and carbonate-dependent chloride-HCO3(-) exchange with a Na(+):HCO3(-) stoichiometry of 2:1. Plays a major role in pH regulation in neurons. Mediates sodium reabsorption in the renal cortical collecting ducts. The polypeptide is Electroneutral sodium bicarbonate exchanger 1 (Mus musculus (Mouse)).